The following is a 659-amino-acid chain: tRNA (guanine(26)-N(2))-dimethyltransferase (659 aa).

A mitochondrion-targeting transit peptide spans 1 to 23 (MQGSSLWLSLTFRSARVLSRARF). In terms of domain architecture, Trm1 methyltransferase spans 55 to 499 (TTVTEGAAKI…APASALWDIM (445 aa)). Arg-82 is an S-adenosyl-L-methionine binding site. Ser-120 carries the post-translational modification Phosphoserine. 2 residues coordinate S-adenosyl-L-methionine: Arg-166 and Asp-184. Cys-348, Cys-351, Cys-384, and Cys-387 together coordinate Zn(2+). Ser-517 is modified (phosphoserine). 2 disordered regions span residues 537 to 578 (EDAN…AMEE) and 616 to 659 (RGDQ…PGID). The Nuclear localization signal signature appears at 543–575 (SRQRGLKRFQANPEANWGPRPRARPGGKAADEA). The segment at 600-627 (RLKTFPCKRFKEGTCQRGDQCCYSHSPP) adopts a C3H1-type zinc-finger fold. At Ser-625 the chain carries Phosphoserine. Residues Thr-628 and Thr-646 each carry the phosphothreonine modification.

This sequence belongs to the class I-like SAM-binding methyltransferase superfamily. Trm1 family. Post-translationally, (Microbial infection) Cleaved between Gln-530 and Ala-531 by the 3C-like proteinase nsp5 from human coronavirus SARS-CoV-2, leading to its inactivation.

Its subcellular location is the mitochondrion. It is found in the nucleus. It localises to the cytoplasm. The catalysed reaction is guanosine(26) in tRNA + 2 S-adenosyl-L-methionine = N(2)-dimethylguanosine(26) in tRNA + 2 S-adenosyl-L-homocysteine + 2 H(+). Dimethylates a single guanine residue at position 26 of most nuclear- and mitochondrial-encoded tRNAs using S-adenosyl-L-methionine as donor of the methyl groups. tRNA guanine(26)-dimethylation is required for redox homeostasis and ensure proper cellular proliferation and oxidative stress survival. This is tRNA (guanine(26)-N(2))-dimethyltransferase from Homo sapiens (Human).